Consider the following 482-residue polypeptide: MFDALADRLEDAWKKLRGQDKISESNIKEALQEVRRALLAADVNLQVVKGFIKDVEQKALGADVISGVNPGQQFIKIVYDELVNLMGESNVPLAQAEQAPTVILMAGLQGTGKTTATAKLALYLRKQKRSALMVATDVYRPAAIDQLKTLGQQIDVPVFDLGSDANPVEIARQGVEKAKELGVDTVLIDTAGRLQIDPQMMAELAEIKQVVKPDDTLLVVDAMTGQEAANLTHTFHEQIGITGAILTKLDGDTRGGAALSVRQISGQPIKFVGVGEKVEALQPFYPDRLASRILNMGDVLTLVEKAQEAIDVGDVEKLQNKILEATFDFDDFIKQMRFMKNMGSLGGLLKMIPGMNKLSSGDIEKGEKELKRTEAMISSMTTEERKNPDLLAKSPSRRRRIAQGSGHSETDVSKLITNFTKMRTMMQQMGMGGMPGGMPGMGAMPGMGGGMFGGQPGPGFRGYRGGGGKPKKKKKKKGFGQL.

GTP-binding positions include 107–114, 189–193, and 247–250; these read GLQGTGKT, DTAGR, and TKLD. 2 disordered regions span residues 380-413 and 452-482; these read MTTE…TDVS and FGGQ…FGQL. The span at 452 to 468 shows a compositional bias: gly residues; the sequence is FGGQPGPGFRGYRGGGG. Residues 469–482 show a composition bias toward basic residues; that stretch reads KPKKKKKKKGFGQL.

This sequence belongs to the GTP-binding SRP family. SRP54 subfamily. Part of the signal recognition particle protein translocation system, which is composed of SRP and FtsY.

Its subcellular location is the cytoplasm. It carries out the reaction GTP + H2O = GDP + phosphate + H(+). Functionally, involved in targeting and insertion of nascent membrane proteins into the cytoplasmic membrane. Binds to the hydrophobic signal sequence of the ribosome-nascent chain (RNC) as it emerges from the ribosomes. The SRP-RNC complex is then targeted to the cytoplasmic membrane where it interacts with the SRP receptor FtsY. This is Signal recognition particle protein from Synechocystis sp. (strain ATCC 27184 / PCC 6803 / Kazusa).